The chain runs to 290 residues: Nucleotide-binding protein Sde_3181 (290 aa).

ATP is bound at residue 8–15 (GRSGSGKT). 60–63 (DARN) contacts GTP.

It belongs to the RapZ-like family.

Functionally, displays ATPase and GTPase activities. This chain is Nucleotide-binding protein Sde_3181, found in Saccharophagus degradans (strain 2-40 / ATCC 43961 / DSM 17024).